Here is a 502-residue protein sequence, read N- to C-terminus: UDP-N-acetylmuramoylalanine--D-glutamate ligase (502 aa).

Residue glycine 129–threonine 135 participates in ATP binding.

It belongs to the MurCDEF family.

The protein localises to the cytoplasm. It carries out the reaction UDP-N-acetyl-alpha-D-muramoyl-L-alanine + D-glutamate + ATP = UDP-N-acetyl-alpha-D-muramoyl-L-alanyl-D-glutamate + ADP + phosphate + H(+). Its pathway is cell wall biogenesis; peptidoglycan biosynthesis. In terms of biological role, cell wall formation. Catalyzes the addition of glutamate to the nucleotide precursor UDP-N-acetylmuramoyl-L-alanine (UMA). The chain is UDP-N-acetylmuramoylalanine--D-glutamate ligase from Burkholderia ambifaria (strain MC40-6).